Here is a 292-residue protein sequence, read N- to C-terminus: Phosphatidylserine decarboxylase proenzyme (292 aa).

Active-site charge relay system; for autoendoproteolytic cleavage activity residues include Asp-92, His-149, and Ser-256. The Schiff-base intermediate with substrate; via pyruvic acid; for decarboxylase activity role is filled by Ser-256. At Ser-256 the chain carries Pyruvic acid (Ser); by autocatalysis.

It belongs to the phosphatidylserine decarboxylase family. PSD-B subfamily. Prokaryotic type I sub-subfamily. Heterodimer of a large membrane-associated beta subunit and a small pyruvoyl-containing alpha subunit. The cofactor is pyruvate. In terms of processing, is synthesized initially as an inactive proenzyme. Formation of the active enzyme involves a self-maturation process in which the active site pyruvoyl group is generated from an internal serine residue via an autocatalytic post-translational modification. Two non-identical subunits are generated from the proenzyme in this reaction, and the pyruvate is formed at the N-terminus of the alpha chain, which is derived from the carboxyl end of the proenzyme. The autoendoproteolytic cleavage occurs by a canonical serine protease mechanism, in which the side chain hydroxyl group of the serine supplies its oxygen atom to form the C-terminus of the beta chain, while the remainder of the serine residue undergoes an oxidative deamination to produce ammonia and the pyruvoyl prosthetic group on the alpha chain. During this reaction, the Ser that is part of the protease active site of the proenzyme becomes the pyruvoyl prosthetic group, which constitutes an essential element of the active site of the mature decarboxylase.

Its subcellular location is the cell membrane. It catalyses the reaction a 1,2-diacyl-sn-glycero-3-phospho-L-serine + H(+) = a 1,2-diacyl-sn-glycero-3-phosphoethanolamine + CO2. It participates in phospholipid metabolism; phosphatidylethanolamine biosynthesis; phosphatidylethanolamine from CDP-diacylglycerol: step 2/2. Functionally, catalyzes the formation of phosphatidylethanolamine (PtdEtn) from phosphatidylserine (PtdSer). The chain is Phosphatidylserine decarboxylase proenzyme from Baumannia cicadellinicola subsp. Homalodisca coagulata.